Here is a 117-residue protein sequence, read N- to C-terminus: Prefoldin subunit beta (117 aa).

It belongs to the prefoldin subunit beta family. As to quaternary structure, heterohexamer of two alpha and four beta subunits.

It localises to the cytoplasm. Molecular chaperone capable of stabilizing a range of proteins. Seems to fulfill an ATP-independent, HSP70-like function in archaeal de novo protein folding. The polypeptide is Prefoldin subunit beta (pfdB) (Pyrococcus abyssi (strain GE5 / Orsay)).